The chain runs to 243 residues: F-box protein pof15 (243 aa).

One can recognise an F-box domain in the interval 28–73; it reads QTSSTLLPVEVIDSVMQYLPAHDVIQSSFASYPLTLIANKIIRARL.

It participates in protein modification; protein ubiquitination. Its function is as follows. Probable substrate recognition component of a SCF (SKP1-CUL1-F-box protein) E3 ubiquitin-protein ligase complex that mediates the ubiquitination and subsequent proteasomal degradation of target proteins. The polypeptide is F-box protein pof15 (pof15) (Schizosaccharomyces pombe (strain 972 / ATCC 24843) (Fission yeast)).